A 266-amino-acid chain; its full sequence is Undecaprenyl-diphosphatase (266 aa).

Helical transmembrane passes span 1-21 (MTLTEIIILAIIQGITEFLPI), 39-59 (QGLAFDVAVHVGSLLAVMIYF), 87-107 (WWVIIATIPALIFGFAGKAFI), 111-131 (ARSALVIACTTIGFGLLLWYA), 150-172 (LIVGMAQALALIPGTSRSGITMT), 187-207 (FSFLLSIPVILGAGLLATLDL), 218-238 (ALIVGAVLSFVSAYACIYLFL), and 244-264 (IGMLPFVIYRMLLGVILLLFV).

It belongs to the UppP family.

It localises to the cell inner membrane. The enzyme catalyses di-trans,octa-cis-undecaprenyl diphosphate + H2O = di-trans,octa-cis-undecaprenyl phosphate + phosphate + H(+). Its function is as follows. Catalyzes the dephosphorylation of undecaprenyl diphosphate (UPP). Confers resistance to bacitracin. In Pseudoalteromonas atlantica (strain T6c / ATCC BAA-1087), this protein is Undecaprenyl-diphosphatase.